We begin with the raw amino-acid sequence, 974 residues long: Isoleucine--tRNA ligase (974 aa).

The 'HIGH' region signature appears at 69-79 (PYANGALHMGH). L-isoleucyl-5'-AMP is bound at residue Glu-585. A 'KMSKS' region motif is present at residues 626–630 (KMSKS). Residue Lys-629 coordinates ATP. Zn(2+)-binding residues include Cys-939, Cys-942, Cys-959, and Cys-962.

This sequence belongs to the class-I aminoacyl-tRNA synthetase family. IleS type 1 subfamily. As to quaternary structure, monomer. Requires Zn(2+) as cofactor.

The protein localises to the cytoplasm. It catalyses the reaction tRNA(Ile) + L-isoleucine + ATP = L-isoleucyl-tRNA(Ile) + AMP + diphosphate. Catalyzes the attachment of isoleucine to tRNA(Ile). As IleRS can inadvertently accommodate and process structurally similar amino acids such as valine, to avoid such errors it has two additional distinct tRNA(Ile)-dependent editing activities. One activity is designated as 'pretransfer' editing and involves the hydrolysis of activated Val-AMP. The other activity is designated 'posttransfer' editing and involves deacylation of mischarged Val-tRNA(Ile). This Parasynechococcus marenigrum (strain WH8102) protein is Isoleucine--tRNA ligase.